The following is a 227-amino-acid chain: MELVFIRHGQSEWNAKNLFTGWRDVKLSEQGLAEAAAAGKKLKENGYEFDIAFTSVLTRAIKTCNIVLEESDQLFVPQIKTWRLNERHYGRLQGLDKKQTAEKYGDEQVRIWRRSYDTLPPLLDKDDAFSAHKDRRYAHLPADVVPDGENLKVTLERVLPFWEDQIAPAILSGKRVLVAAHGNSLRALAKHIEGISDEDIMGLEIPTGQPLVYKLDDNLKVIEKFYL.

Residues 7–14, 20–21, Arg-59, 86–89, Lys-97, 113–114, and 182–183 contribute to the substrate site; these read RHGQSEWN, TG, ERHY, RR, and GN. The Tele-phosphohistidine intermediate role is filled by His-8. Residue Glu-86 is the Proton donor/acceptor of the active site.

Belongs to the phosphoglycerate mutase family. BPG-dependent PGAM subfamily. In terms of assembly, homodimer.

The enzyme catalyses (2R)-2-phosphoglycerate = (2R)-3-phosphoglycerate. It participates in carbohydrate degradation; glycolysis; pyruvate from D-glyceraldehyde 3-phosphate: step 3/5. Catalyzes the interconversion of 2-phosphoglycerate and 3-phosphoglycerate. The chain is 2,3-bisphosphoglycerate-dependent phosphoglycerate mutase from Neisseria gonorrhoeae (strain ATCC 700825 / FA 1090).